The chain runs to 172 residues: Iron-sulfur cluster assembly protein SufA (172 aa).

The signal sequence occupies residues 1-19 (MFINIFLFLFAATINISSS). C96, C164, and C166 together coordinate [4Fe-4S] cluster.

The protein belongs to the HesB/IscA family. Homodimer.

It localises to the plastid. Its subcellular location is the apicoplast. Its pathway is cofactor biosynthesis; iron-sulfur cluster biosynthesis. Functionally, participates in the sulfur mobilization (SUF) pathway for iron-sulfur (Fe-S) cluster biogenesis. Involved in the pre-assembly of [4Fe-4S] clusters and their transfer to target proteins. In Plasmodium berghei (strain Anka), this protein is Iron-sulfur cluster assembly protein SufA.